A 338-amino-acid chain; its full sequence is Glyceraldehyde-3-phosphate dehydrogenase (338 aa).

NAD(+) contacts are provided by residues 12 to 13, Asp34, and Arg79; that span reads RI. D-glyceraldehyde 3-phosphate is bound by residues 150 to 152, Thr181, 210 to 211, and Arg233; these read SCT and TG. Catalysis depends on Cys151, which acts as the Nucleophile. Asn315 is an NAD(+) binding site.

It belongs to the glyceraldehyde-3-phosphate dehydrogenase family. Homotetramer.

The protein localises to the cytoplasm. The enzyme catalyses D-glyceraldehyde 3-phosphate + phosphate + NAD(+) = (2R)-3-phospho-glyceroyl phosphate + NADH + H(+). It functions in the pathway carbohydrate degradation; glycolysis; pyruvate from D-glyceraldehyde 3-phosphate: step 1/5. The polypeptide is Glyceraldehyde-3-phosphate dehydrogenase (GPD) (Sordaria macrospora).